The chain runs to 425 residues: Stabilizer of axonemal microtubules 4 (425 aa).

Disordered regions lie at residues Arg259 to Pro297 and Asn315 to Gln335. A compositionally biased stretch (basic and acidic residues) spans Gly260–Glu272. The segment covering Pro277–Ser290 has biased composition (low complexity). The span at Phe321–Ser332 shows a compositional bias: polar residues.

Microtubule inner protein component of sperm flagellar doublet microtubules. Interacts with PPP1CA. As to expression, expressed in brain, ovaries and testis. Expressed in the tracheal epithelium and in secondary spermatocytes and spermatids present in the seminiferous tubule. Expressed in ependymal cells lining the ventricular walls of the brain.

The protein localises to the cell projection. It localises to the cilium. The protein resides in the cytoplasm. It is found in the cytoskeleton. Its subcellular location is the flagellum axoneme. The sequence is that of Stabilizer of axonemal microtubules 4 from Rattus norvegicus (Rat).